A 309-amino-acid polypeptide reads, in one-letter code: 2-dehydro-3-deoxygluconokinase (309 aa).

Substrate is bound by residues G28–N32, Y88, Y102–R104, and R170. Residues N168–R170, K228–S233, and A261–D264 each bind ATP. D264 is a binding site for substrate. D264 functions as the Proton acceptor in the catalytic mechanism.

The protein belongs to the carbohydrate kinase pfkB family.

It catalyses the reaction 2-dehydro-3-deoxy-D-gluconate + ATP = 2-dehydro-3-deoxy-6-phospho-D-gluconate + ADP + H(+). The protein operates within carbohydrate acid metabolism; 2-dehydro-3-deoxy-D-gluconate degradation; D-glyceraldehyde 3-phosphate and pyruvate from 2-dehydro-3-deoxy-D-gluconate: step 1/2. Catalyzes the phosphorylation of 2-keto-3-deoxygluconate (KDG) to produce 2-keto-3-deoxy-6-phosphogluconate (KDPG). This is 2-dehydro-3-deoxygluconokinase (kdgK) from Escherichia coli (strain ATCC 9637 / CCM 2024 / DSM 1116 / LMG 11080 / NBRC 13500 / NCIMB 8666 / NRRL B-766 / W).